A 91-amino-acid polypeptide reads, in one-letter code: Probable Fe(2+)-trafficking protein (91 aa).

It belongs to the Fe(2+)-trafficking protein family.

Its function is as follows. Could be a mediator in iron transactions between iron acquisition and iron-requiring processes, such as synthesis and/or repair of Fe-S clusters in biosynthetic enzymes. The sequence is that of Probable Fe(2+)-trafficking protein from Shewanella amazonensis (strain ATCC BAA-1098 / SB2B).